Consider the following 362-residue polypeptide: Chorismate synthase (362 aa).

2 residues coordinate NADP(+): Arg-48 and Arg-54. FMN-binding positions include 125 to 127, 241 to 242, Gly-286, 301 to 305, and Arg-327; these read RSS, NA, and KPTSS.

It belongs to the chorismate synthase family. In terms of assembly, homotetramer. It depends on FMNH2 as a cofactor.

The enzyme catalyses 5-O-(1-carboxyvinyl)-3-phosphoshikimate = chorismate + phosphate. It participates in metabolic intermediate biosynthesis; chorismate biosynthesis; chorismate from D-erythrose 4-phosphate and phosphoenolpyruvate: step 7/7. Its function is as follows. Catalyzes the anti-1,4-elimination of the C-3 phosphate and the C-6 proR hydrogen from 5-enolpyruvylshikimate-3-phosphate (EPSP) to yield chorismate, which is the branch point compound that serves as the starting substrate for the three terminal pathways of aromatic amino acid biosynthesis. This reaction introduces a second double bond into the aromatic ring system. This chain is Chorismate synthase, found in Paramagnetospirillum magneticum (strain ATCC 700264 / AMB-1) (Magnetospirillum magneticum).